A 304-amino-acid chain; its full sequence is Ribosomal RNA small subunit methyltransferase H (304 aa).

Residues 37 to 39 (GGH), Asp-57, Phe-79, Asp-100, and His-107 each bind S-adenosyl-L-methionine.

Belongs to the methyltransferase superfamily. RsmH family.

It localises to the cytoplasm. The enzyme catalyses cytidine(1402) in 16S rRNA + S-adenosyl-L-methionine = N(4)-methylcytidine(1402) in 16S rRNA + S-adenosyl-L-homocysteine + H(+). Functionally, specifically methylates the N4 position of cytidine in position 1402 (C1402) of 16S rRNA. The chain is Ribosomal RNA small subunit methyltransferase H from Bacteroides fragilis (strain YCH46).